Reading from the N-terminus, the 525-residue chain is GMP synthase [glutamine-hydrolyzing] (525 aa).

One can recognise a Glutamine amidotransferase type-1 domain in the interval 9 to 207; it reads RILILDFGSQ…VRDICQCEAL (199 aa). C86 serves as the catalytic Nucleophile. Residues H181 and E183 contribute to the active site. Residues 208–400 enclose the GMPS ATP-PPase domain; that stretch reads WTPAKIIDDA…LGLPYDMLYR (193 aa). Residue 235-241 coordinates ATP; the sequence is SGGVDSS.

In terms of assembly, homodimer.

It catalyses the reaction XMP + L-glutamine + ATP + H2O = GMP + L-glutamate + AMP + diphosphate + 2 H(+). It functions in the pathway purine metabolism; GMP biosynthesis; GMP from XMP (L-Gln route): step 1/1. Catalyzes the synthesis of GMP from XMP. The chain is GMP synthase [glutamine-hydrolyzing] from Salmonella paratyphi B (strain ATCC BAA-1250 / SPB7).